The primary structure comprises 249 residues: 3-deoxy-D-manno-octulosonic acid kinase (249 aa).

Asp-175 is an active-site residue.

The protein belongs to the protein kinase superfamily. KdkA/RfaP family.

The protein resides in the cell inner membrane. The enzyme catalyses an alpha-Kdo-(2-&gt;6)-lipid IVA + ATP = a 4-O-phospho-alpha-Kdo-(2-&gt;6)-lipid IVA + ADP + H(+). It participates in bacterial outer membrane biogenesis; LPS core biosynthesis. Functionally, catalyzes the ATP-dependent phosphorylation of the 3-deoxy-D-manno-octulosonic acid (Kdo) residue in Kdo-lipid IV(A) at the 4-OH position. The polypeptide is 3-deoxy-D-manno-octulosonic acid kinase (Xanthomonas axonopodis pv. citri (strain 306)).